The following is a 398-amino-acid chain: Nematocin receptor 2 (398 aa).

The Extracellular portion of the chain corresponds to 1-25; sequence MNNNTLNITNQRTAAAMSQIYFLVV. N-linked (GlcNAc...) asparagine glycans are attached at residues Asn3 and Asn7. The helical transmembrane segment at 26 to 46 threads the bilayer; it reads YQTAVMIVSLLGNLFLLFVIF. Topologically, residues 47-58 are cytoplasmic; it reads RANQVMKRRVSP. A helical membrane pass occupies residues 59–79; that stretch reads VQLLIIHTCVADLLFALLSLG. At 80–99 the chain is on the extracellular side; it reads TEILTLRTYPQYYGSNFVCK. A disulfide bridge links Cys98 with Cys173. The helical transmembrane segment at 100-120 threads the bilayer; that stretch reads LMRYVQMFPMYASPFLLVAIS. The Cytoplasmic portion of the chain corresponds to 121–143; the sequence is ADRYQAICRPLAHFRSSRYRRPN. Residues 144-164 form a helical membrane-spanning segment; that stretch reads WMAAIAWGLALVLSIPQFFVW. The Extracellular portion of the chain corresponds to 165 to 187; sequence TKHSKTGRCSTIYGQNKNTVKIT. Residues 188-208 traverse the membrane as a helical segment; sequence YVIMFNTLAWLLPSILAAVFY. The Cytoplasmic segment spans residues 209–271; it reads YCVCKAVRLS…DRKRVQTVRL (63 aa). The helical transmembrane segment at 272–292 threads the bilayer; it reads TITIVACNFFLWMPFCLINVI. The Extracellular portion of the chain corresponds to 293–302; sequence QALWPEISHI. A helical membrane pass occupies residues 303–325; that stretch reads MFINYVAILGNLNSCLNPWIYIL. The Cytoplasmic portion of the chain corresponds to 326–398; that stretch reads FNRSHVRKAL…DSTSLKTNSN (73 aa).

The protein belongs to the G-protein coupled receptor 1 family. Vasopressin/oxytocin receptor subfamily. In terms of tissue distribution, detected in the ADL sensory neurons, the RMED and RMEV motor neurons, and the PQR tail neuron. In males, detected in SPC tail neurons involved in spicule penetration and sperm transfer, and male-specific oblique muscles involved in vulval contact.

It is found in the cell membrane. In terms of biological role, not directly activated by nematocin. May modulate activity of the nematocin receptor ntr-1, leading to reduced intracellular cAMP production. Plays a role in male mating behavior. The protein is Nematocin receptor 2 of Caenorhabditis elegans.